The primary structure comprises 372 residues: Putative glutamate--cysteine ligase 2 (372 aa).

It belongs to the glutamate--cysteine ligase type 2 family. YbdK subfamily. As to quaternary structure, homodimer.

It catalyses the reaction L-cysteine + L-glutamate + ATP = gamma-L-glutamyl-L-cysteine + ADP + phosphate + H(+). ATP-dependent carboxylate-amine ligase which exhibits weak glutamate--cysteine ligase activity. The sequence is that of Putative glutamate--cysteine ligase 2 (ybdK) from Escherichia coli (strain K12 / MC4100 / BW2952).